A 234-amino-acid polypeptide reads, in one-letter code: Phosphoribosylformylglycinamidine synthase subunit PurQ (234 aa).

In terms of domain architecture, Glutamine amidotransferase type-1 spans 6-234 (VGVVVFPGSN…ESLFRSLTGV (229 aa)). Cys89 (nucleophile) is an active-site residue. Active-site residues include His206 and Glu208.

As to quaternary structure, part of the FGAM synthase complex composed of 1 PurL, 1 PurQ and 2 PurS subunits.

The protein resides in the cytoplasm. It catalyses the reaction N(2)-formyl-N(1)-(5-phospho-beta-D-ribosyl)glycinamide + L-glutamine + ATP + H2O = 2-formamido-N(1)-(5-O-phospho-beta-D-ribosyl)acetamidine + L-glutamate + ADP + phosphate + H(+). The enzyme catalyses L-glutamine + H2O = L-glutamate + NH4(+). Its pathway is purine metabolism; IMP biosynthesis via de novo pathway; 5-amino-1-(5-phospho-D-ribosyl)imidazole from N(2)-formyl-N(1)-(5-phospho-D-ribosyl)glycinamide: step 1/2. Its function is as follows. Part of the phosphoribosylformylglycinamidine synthase complex involved in the purines biosynthetic pathway. Catalyzes the ATP-dependent conversion of formylglycinamide ribonucleotide (FGAR) and glutamine to yield formylglycinamidine ribonucleotide (FGAM) and glutamate. The FGAM synthase complex is composed of three subunits. PurQ produces an ammonia molecule by converting glutamine to glutamate. PurL transfers the ammonia molecule to FGAR to form FGAM in an ATP-dependent manner. PurS interacts with PurQ and PurL and is thought to assist in the transfer of the ammonia molecule from PurQ to PurL. In Chlorobium chlorochromatii (strain CaD3), this protein is Phosphoribosylformylglycinamidine synthase subunit PurQ.